The sequence spans 494 residues: Metalloprotease TIKI1 (494 aa).

Residues 1–25 (MTMMTMMMVSWSAFLQICWILMVRA) form the signal peptide. Residues 26-467 (NQFNPGEPSG…QEHERANHDR (442 aa)) are Extracellular-facing. 2 N-linked (GlcNAc...) asparagine glycosylation sites follow: N234 and N282. Residues 468 to 488 (TFSGSSSRTGPALSALAVCVQ) traverse the membrane as a helical segment. Over 489–494 (MLRLLL) the chain is Cytoplasmic.

This sequence belongs to the TIKI family. Mn(2+) serves as cofactor. Co(2+) is required as a cofactor.

Its subcellular location is the cell membrane. In terms of biological role, metalloprotease that acts as a negative regulator of the Wnt signaling pathway by mediating the cleavage of the N-terminal residues of a subset of Wnt proteins. Following cleavage, Wnt proteins become oxidized and form large disulfide-bond oligomers, leading to their inactivation. The chain is Metalloprotease TIKI1 (trabd2a) from Danio rerio (Zebrafish).